The primary structure comprises 341 residues: MATIKDVAKRANVSTTTVSHVINKTRFVAEETRNAVWAAIKELHYSPSAVARSLKVNHTKSIGLLATSSEAAYFAEIIEAVEKNCFQKGYTLILGNAWNNLEKQRAYLSMMAQKRVDGLLVMCSEYPEPLLSMLEEYRHIPMVVMDWGEAKADFTDTVIDNAFAGGYMAGRYLVERGHRDIGVIPGPLERNTGAGRLAGFMKAMEEALINVPDNWIVQGDFEPESGYHAMQQILSQSHRPTAVFCGGDIMAMGALCAADEMGLRVPQDVSVIGYDNVRNARYFTPALTTIHQPKDSLGETAFNMLLDRIVNKREESQSIEVHPRLVERRSVADGPFRDYRR.

Residues 2 to 56 (ATIKDVAKRANVSTTTVSHVINKTRFVAEETRNAVWAAIKELHYSPSAVARSLKV) enclose the HTH lacI-type domain. Residues 4–23 (IKDVAKRANVSTTTVSHVIN) constitute a DNA-binding region (H-T-H motif). A DNA-binding region spans residues 48 to 56 (SAVARSLKV). The hypoxanthine site is built by Y73, R190, T192, F221, and D275.

As to quaternary structure, homodimer.

The protein operates within purine metabolism; purine nucleotide biosynthesis [regulation]. In terms of biological role, is the main repressor of the genes involved in the de novo synthesis of purine nucleotides, regulating purB, purC, purEK, purF, purHD, purL, purMN and guaBA expression. PurR is allosterically activated to bind its cognate DNA by binding the purine corepressors, hypoxanthine or guanine, thereby effecting transcription repression. The chain is HTH-type transcriptional repressor PurR from Salmonella typhimurium (strain LT2 / SGSC1412 / ATCC 700720).